The sequence spans 279 residues: NADPH-dependent 7-cyano-7-deazaguanine reductase (279 aa).

86–88 (IES) is a substrate binding site. An NADPH-binding site is contributed by 88–89 (SK). The active-site Thioimide intermediate is cysteine 187. The active-site Proton donor is aspartate 194. 226-227 (HE) is a substrate binding site. NADPH is bound at residue 255 to 256 (RG).

It belongs to the GTP cyclohydrolase I family. QueF type 2 subfamily. As to quaternary structure, homodimer.

It localises to the cytoplasm. The enzyme catalyses 7-aminomethyl-7-carbaguanine + 2 NADP(+) = 7-cyano-7-deazaguanine + 2 NADPH + 3 H(+). The protein operates within tRNA modification; tRNA-queuosine biosynthesis. In terms of biological role, catalyzes the NADPH-dependent reduction of 7-cyano-7-deazaguanine (preQ0) to 7-aminomethyl-7-deazaguanine (preQ1). The protein is NADPH-dependent 7-cyano-7-deazaguanine reductase of Actinobacillus pleuropneumoniae serotype 7 (strain AP76).